The chain runs to 384 residues: Probable fructokinase-6, chloroplastic (384 aa).

The N-terminal 46 residues, 1 to 46, are a transit peptide targeting the chloroplast; it reads MALQATTTTFCFSGPTFRSTPHSLTSKRPISIKATTSSPSRLSNSR. Positions 34 to 61 are disordered; it reads ATTSSPSRLSNSRSNLKGRALSSDGSTQ. A compositionally biased stretch (low complexity) spans 35–48; it reads TTSSPSRLSNSRSN.

Belongs to the carbohydrate kinase PfkB family.

The protein localises to the plastid. It localises to the chloroplast. The enzyme catalyses D-fructose + ATP = D-fructose 6-phosphate + ADP + H(+). Its pathway is glycan biosynthesis; starch biosynthesis. May play an important role in maintaining the flux of carbon towards starch formation. The chain is Probable fructokinase-6, chloroplastic from Arabidopsis thaliana (Mouse-ear cress).